The sequence spans 134 residues: Small ribosomal subunit protein uS11 (134 aa).

Belongs to the universal ribosomal protein uS11 family. Part of the 30S ribosomal subunit. Interacts with proteins S7 and S18. Binds to IF-3.

Located on the platform of the 30S subunit, it bridges several disparate RNA helices of the 16S rRNA. Forms part of the Shine-Dalgarno cleft in the 70S ribosome. This is Small ribosomal subunit protein uS11 from Micrococcus luteus (strain ATCC 4698 / DSM 20030 / JCM 1464 / CCM 169 / CCUG 5858 / IAM 1056 / NBRC 3333 / NCIMB 9278 / NCTC 2665 / VKM Ac-2230) (Micrococcus lysodeikticus).